The sequence spans 171 residues: MAAITSATVTIPSFTGLKLAVSSKPKTLSTISRSTSATRAPPKLALKSSLKDFGVIAVATAASIVLAGNAMAMEVLLGSDDGSLAFVPSEFTVAKGEKIVFKNNAGFPHNVVFDEDEIPSGVDASKISMDETALLNGAGETYEVTLTEPGSYGFYCAPHQGAGMVGKLTVK.

Residues 73–171 enclose the Plastocyanin-like domain; sequence MEVLLGSDDG…AGMVGKLTVK (99 aa). Residues His109, Cys156, His159, and Met164 each contribute to the Cu cation site.

Belongs to the plastocyanin family. Requires Cu(2+) as cofactor.

The protein resides in the plastid. It is found in the chloroplast thylakoid membrane. Functionally, participates in electron transfer between P700 and the cytochrome b6-f complex in photosystem I. Seems to be a minor plastocyanin in Arabidopsis. This Arabidopsis thaliana (Mouse-ear cress) protein is Plastocyanin minor isoform, chloroplastic (PETE).